We begin with the raw amino-acid sequence, 183 residues long: GTP cyclohydrolase 1 (183 aa).

Zn(2+) contacts are provided by C71, H74, and C142.

This sequence belongs to the GTP cyclohydrolase I family. In terms of assembly, toroid-shaped homodecamer, composed of two pentamers of five dimers.

The catalysed reaction is GTP + H2O = 7,8-dihydroneopterin 3'-triphosphate + formate + H(+). The protein operates within cofactor biosynthesis; 7,8-dihydroneopterin triphosphate biosynthesis; 7,8-dihydroneopterin triphosphate from GTP: step 1/1. The polypeptide is GTP cyclohydrolase 1 (Leptospira interrogans serogroup Icterohaemorrhagiae serovar copenhageni (strain Fiocruz L1-130)).